Consider the following 335-residue polypeptide: Putative hydrogenase expression/formation protein MJ0676 (335 aa).

This sequence belongs to the HypE family.

The sequence is that of Putative hydrogenase expression/formation protein MJ0676 from Methanocaldococcus jannaschii (strain ATCC 43067 / DSM 2661 / JAL-1 / JCM 10045 / NBRC 100440) (Methanococcus jannaschii).